Here is a 584-residue protein sequence, read N- to C-terminus: Methionine--tRNA ligase (584 aa).

A 'HIGH' region motif is present at residues 12 to 22; that stretch reads PYANGDLHLGH. The Zn(2+) site is built by cysteine 144, cysteine 147, cysteine 157, and cysteine 160. Residues 334-338 carry the 'KMSKS' region motif; that stretch reads QFSTS. Threonine 337 contributes to the ATP binding site. Positions 541–563 are disordered; that stretch reads EGRDRWAPSELEAGRPLPPPQPL.

Belongs to the class-I aminoacyl-tRNA synthetase family. MetG type 1 subfamily. As to quaternary structure, monomer. The cofactor is Zn(2+).

It is found in the cytoplasm. The catalysed reaction is tRNA(Met) + L-methionine + ATP = L-methionyl-tRNA(Met) + AMP + diphosphate. Is required not only for elongation of protein synthesis but also for the initiation of all mRNA translation through initiator tRNA(fMet) aminoacylation. This is Methionine--tRNA ligase from Thermomicrobium roseum (strain ATCC 27502 / DSM 5159 / P-2).